Reading from the N-terminus, the 343-residue chain is MAMVSEFLKQAWFMEHQEQEYIKSVKGGPVVPQQQPNFDPSADVVALEKAMTAKGVDEATIIDIMTKRTNAQRHRIKAAYQKAKGKSLEEAMKRVLKSHLEDVVVALLKTPAQFDAEELRACMKGLGTDEDTLIEILASRSNKEIREASRYYKEVLKRDLTQDIISDTSGHFQKALVVLAKGDRCEDPHVNDDLADNDARALYEAGEQKKGTDVNVFVTVLTARSYPHLRRVFQKYTKYSKHDMNKVVDMELKGDIEKCLTALVKCATSKPAFFAEKLHLAMKGFGTRHKDLIRIMVSRHEVDMNEIKCYYKKMYGISLCQAIMDDLKGDYETILVALCGSDN.

Gln19 participates in a covalent cross-link: Isoglutamyl lysine isopeptide (Gln-Lys) (interchain with K-?). Tyr21 is subject to Phosphotyrosine; by EGFR; in vitro. Ser24 is subject to Phosphoserine; by PKC; in vitro. Annexin repeat units follow at residues 38 to 109 (FDPS…ALLK), 110 to 181 (TPAQ…VLAK), 193 to 265 (DLAD…ALVK), and 269 to 340 (SKPA…ALCG).

This sequence belongs to the annexin family. Post-translationally, phosphorylated by protein kinase C and epidermal growth factor receptor/kinase. In terms of processing, the N-terminus is blocked.

It localises to the nucleus. It is found in the cytoplasm. Its subcellular location is the cell projection. The protein localises to the cilium. The protein resides in the basolateral cell membrane. Calcium/phospholipid-binding protein which promotes membrane fusion and is involved in exocytosis. This protein regulates phospholipase A2 activity. It seems to bind from two to four calcium ions with high affinity. In Columba livia (Rock dove), this protein is Annexin A1 isoform p37 (CP37).